Reading from the N-terminus, the 354-residue chain is Uroporphyrinogen decarboxylase (354 aa).

Residues 27–31 (RQAGR), D77, Y154, T209, and H327 contribute to the substrate site.

This sequence belongs to the uroporphyrinogen decarboxylase family. As to quaternary structure, homodimer.

The protein resides in the cytoplasm. It carries out the reaction uroporphyrinogen III + 4 H(+) = coproporphyrinogen III + 4 CO2. It participates in porphyrin-containing compound metabolism; protoporphyrin-IX biosynthesis; coproporphyrinogen-III from 5-aminolevulinate: step 4/4. Its function is as follows. Catalyzes the decarboxylation of four acetate groups of uroporphyrinogen-III to yield coproporphyrinogen-III. This chain is Uroporphyrinogen decarboxylase, found in Salmonella schwarzengrund (strain CVM19633).